Here is a 215-residue protein sequence, read N- to C-terminus: Cytochrome b6 (215 aa).

Residues 32 to 52 form a helical membrane-spanning segment; the sequence is IFYCFGGITFTCFLVQVATGF. A heme c-binding site is contributed by Cys35. Heme b is bound by residues His86 and His100. 3 helical membrane-spanning segments follow: residues 90 to 110, 116 to 136, and 186 to 206; these read ASMM…TGGF, LTWV…VTGY, and LHTF…FLMI. Residues His187 and His202 each contribute to the heme b site.

The protein belongs to the cytochrome b family. PetB subfamily. The 4 large subunits of the cytochrome b6-f complex are cytochrome b6, subunit IV (17 kDa polypeptide, PetD), cytochrome f and the Rieske protein, while the 4 small subunits are PetG, PetL, PetM and PetN. The complex functions as a dimer. Heme b serves as cofactor. Requires heme c as cofactor.

It is found in the plastid. It localises to the chloroplast thylakoid membrane. In terms of biological role, component of the cytochrome b6-f complex, which mediates electron transfer between photosystem II (PSII) and photosystem I (PSI), cyclic electron flow around PSI, and state transitions. This Auxenochlorella protothecoides (Green microalga) protein is Cytochrome b6.